The following is a 436-amino-acid chain: Trigger factor (436 aa).

The PPIase FKBP-type domain maps to glycine 161–proline 246.

Belongs to the FKBP-type PPIase family. Tig subfamily.

The protein localises to the cytoplasm. The catalysed reaction is [protein]-peptidylproline (omega=180) = [protein]-peptidylproline (omega=0). Involved in protein export. Acts as a chaperone by maintaining the newly synthesized protein in an open conformation. Functions as a peptidyl-prolyl cis-trans isomerase. This Thioalkalivibrio sulfidiphilus (strain HL-EbGR7) protein is Trigger factor.